Here is a 1097-residue protein sequence, read N- to C-terminus: Leukemia inhibitory factor receptor (1097 aa).

Positions 1–44 are cleaved as a signal peptide; it reads MMNISLRLRRPPWMVDSNGRRMTSHFQWLLLTFILLYLMNQVTS. Residues 45–833 lie on the Extracellular side of the membrane; it reads EKRGAPRDLK…SMFVVTKENS (789 aa). The region spanning 46–131 is the Fibronectin type-III 1 domain; the sequence is KRGAPRDLKC…ISKFTLNEKN (86 aa). Cystine bridges form between cysteine 55–cysteine 65 and cysteine 82–cysteine 90. N-linked (GlcNAc...) asparagine glycans are attached at residues asparagine 85, asparagine 131, asparagine 143, asparagine 191, asparagine 243, and asparagine 303. An intrachain disulfide couples cysteine 213 to cysteine 270. Fibronectin type-III domains follow at residues 332–434, 435–534, 538–629, 627–719, and 724–833; these read PPDI…VYPR, IPTS…TEAI, GPDT…IPND, PNDD…IGYI, and PIVA…KENS. Cysteine 341 and cysteine 351 form a disulfide bridge. 8 N-linked (GlcNAc...) asparagine glycosylation sites follow: asparagine 366, asparagine 390, asparagine 407, asparagine 426, asparagine 445, asparagine 471, asparagine 481, and asparagine 489. Cysteine 466 and cysteine 511 are oxidised to a cystine. The WSXWS motif signature appears at 519 to 523; sequence WSKWS. Asparagine 572, asparagine 652, asparagine 663, asparagine 680, asparagine 729, and asparagine 787 each carry an N-linked (GlcNAc...) asparagine glycan. The helical transmembrane segment at 834–854 threads the bilayer; the sequence is VGLIIAILIPVAVAVIVGVVT. Over 855–1097 the chain is Cytoplasmic; that stretch reads SILCYRKREW…TNFFQNKPND (243 aa). Positions 869–877 match the Box 1 motif motif; it reads FYPDIPNPE. Position 927 is a phosphoserine (serine 927). Disordered regions lie at residues 982 to 1005 and 1022 to 1097; these read QPQA…KPQM and LDKA…KPND. 2 stretches are compositionally biased toward polar residues: residues 1032–1067 and 1086–1097; these read ANVN…NSRQ and SFTNFFQNKPND. The residue at position 1044 (serine 1044) is a Phosphoserine.

The protein belongs to the type I cytokine receptor family. Type 2 subfamily. In terms of assembly, heterodimer composed of LIFR and IL6ST. The heterodimer formed by LIFR and IL6ST interacts with the complex formed by CNTF and CNTFR.

The protein localises to the cell membrane. Functionally, signal-transducing molecule. May have a common pathway with IL6ST. The soluble form inhibits the biological activity of LIF by blocking its binding to receptors on target cells. This chain is Leukemia inhibitory factor receptor (LIFR), found in Canis lupus familiaris (Dog).